The following is a 240-amino-acid chain: HTH-type transcriptional regulator Mce2R (240 aa).

One can recognise an HTH gntR-type domain in the interval 9-77 (RSVPEEVFEQ…QGDVTTVRDF (69 aa)). Positions 37 to 56 (ERRLAELLGVSRPAVREALK) form a DNA-binding region, H-T-H motif.

Functionally, negatively regulates the expression of its operon as well as expression of end (endonuclease 4). This Mycobacterium tuberculosis (strain CDC 1551 / Oshkosh) protein is HTH-type transcriptional regulator Mce2R (mce2R).